A 108-amino-acid chain; its full sequence is UPF0060 membrane protein RER_49640 (108 aa).

4 helical membrane-spanning segments follow: residues 8–28 (LLFV…WQGI), 33–53 (GWIW…VATM), 62–82 (ILAA…VVMD), and 87–107 (DRFD…IMYA).

The protein belongs to the UPF0060 family.

The protein resides in the cell membrane. In Rhodococcus erythropolis (strain PR4 / NBRC 100887), this protein is UPF0060 membrane protein RER_49640.